Reading from the N-terminus, the 312-residue chain is Protein-methionine-sulfoxide reductase catalytic subunit MsrP (312 aa).

A signal peptide (tat-type signal) is located at residues 1-45; it reads MPVYRPPRIAASEITPERFFLDRRSFLAAAGGLVLGGTGMAHAAA. Mo-molybdopterin is bound by residues Asn-69, 72 to 73, Cys-126, Thr-161, Asn-211, Arg-216, and 227 to 229; these read YE and GIK.

Belongs to the MsrP family. In terms of assembly, heterodimer of a catalytic subunit (MsrP) and a heme-binding subunit (MsrQ). The cofactor is Mo-molybdopterin. Predicted to be exported by the Tat system. The position of the signal peptide cleavage has not been experimentally proven.

Its subcellular location is the periplasm. The enzyme catalyses L-methionyl-[protein] + a quinone + H2O = L-methionyl-(S)-S-oxide-[protein] + a quinol. It catalyses the reaction L-methionyl-[protein] + a quinone + H2O = L-methionyl-(R)-S-oxide-[protein] + a quinol. Functionally, part of the MsrPQ system that repairs oxidized periplasmic proteins containing methionine sulfoxide residues (Met-O), using respiratory chain electrons. Thus protects these proteins from oxidative-stress damage caused by reactive species of oxygen and chlorine generated by the host defense mechanisms. MsrPQ is essential for the maintenance of envelope integrity under bleach stress, rescuing a wide series of structurally unrelated periplasmic proteins from methionine oxidation. The catalytic subunit MsrP is non-stereospecific, being able to reduce both (R-) and (S-) diastereoisomers of methionine sulfoxide. This chain is Protein-methionine-sulfoxide reductase catalytic subunit MsrP, found in Sinorhizobium fredii (strain NBRC 101917 / NGR234).